Reading from the N-terminus, the 206-residue chain is Small ribosomal subunit protein uS4 (206 aa).

Residues 93–156 (CRLDNLVYRL…RKIKIIAEAL (64 aa)) enclose the S4 RNA-binding domain.

It belongs to the universal ribosomal protein uS4 family. As to quaternary structure, part of the 30S ribosomal subunit. Contacts protein S5. The interaction surface between S4 and S5 is involved in control of translational fidelity.

Functionally, one of the primary rRNA binding proteins, it binds directly to 16S rRNA where it nucleates assembly of the body of the 30S subunit. In terms of biological role, with S5 and S12 plays an important role in translational accuracy. In Protochlamydia amoebophila (strain UWE25), this protein is Small ribosomal subunit protein uS4.